A 1131-amino-acid polypeptide reads, in one-letter code: PolyA-specific ribonuclease subunit panl-2 (1131 aa).

Residues 489–864 (VTMQSTHGMN…LPALLAYKKK (376 aa)) form the USP domain. Residues 909–1074 (VGLDAEFIKI…VDARYALKLY (166 aa)) form the Exonuclease domain. Residues 1104-1115 (QTSSPLVVSTTR) show a composition bias toward polar residues. Residues 1104–1131 (QTSSPLVVSTTRKTPEDTNPADAAPKSV) are disordered.

In Caenorhabditis elegans, this protein is PolyA-specific ribonuclease subunit panl-2.